A 254-amino-acid polypeptide reads, in one-letter code: N(G),N(G)-dimethylarginine dimethylaminohydrolase (254 aa).

Substrate-binding positions include leucine 18, aspartate 60, 65 to 66 (ED), arginine 85, and arginine 132. Histidine 162 (proton donor) is an active-site residue. Residue histidine 162 participates in Zn(2+) binding. Isoleucine 243 serves as a coordination point for substrate. Cysteine 249 contributes to the Zn(2+) binding site. Cysteine 249 functions as the Nucleophile in the catalytic mechanism.

This sequence belongs to the DDAH family. In terms of assembly, homodimer.

It catalyses the reaction N(omega),N(omega)-dimethyl-L-arginine + H2O = dimethylamine + L-citrulline. The catalysed reaction is N(omega)-methyl-L-arginine + H2O = L-citrulline + methylamine. With respect to regulation, inhibited by zinc ions. Competitively inhibited by lysine. Functionally, hydrolyzes N(G),N(G)-dimethyl-L-arginine (ADMA) and N(G)-monomethyl-L-arginine (MMA). In Pseudomonas aeruginosa (strain ATCC 15692 / DSM 22644 / CIP 104116 / JCM 14847 / LMG 12228 / 1C / PRS 101 / PAO1), this protein is N(G),N(G)-dimethylarginine dimethylaminohydrolase.